The chain runs to 213 residues: Probable transaldolase (213 aa).

K83 acts as the Schiff-base intermediate with substrate in catalysis.

This sequence belongs to the transaldolase family. Type 3B subfamily.

It is found in the cytoplasm. The catalysed reaction is D-sedoheptulose 7-phosphate + D-glyceraldehyde 3-phosphate = D-erythrose 4-phosphate + beta-D-fructose 6-phosphate. It functions in the pathway carbohydrate degradation; pentose phosphate pathway; D-glyceraldehyde 3-phosphate and beta-D-fructose 6-phosphate from D-ribose 5-phosphate and D-xylulose 5-phosphate (non-oxidative stage): step 2/3. Its function is as follows. Transaldolase is important for the balance of metabolites in the pentose-phosphate pathway. The sequence is that of Probable transaldolase from Geobacillus thermodenitrificans (strain NG80-2).